The sequence spans 419 residues: Hyaluronan synthase (419 aa).

5 helical membrane passes run 8–28, 33–53, 318–338, 345–365, and 376–396; these read LIVLSFICLISILIYLNMYLF, VGIYGVILITYLVIKLGLSFL, IVALWTIFEVVMFMMLIVAIG, AIQLDLIKLFAFLSIIFIVAL, and PASFLLSPLYGILHLFVLQPL.

Belongs to the NodC/HAS family. Requires Mg(2+) as cofactor.

It is found in the cell membrane. It carries out the reaction [hyaluronan](n) + UDP-N-acetyl-alpha-D-glucosamine = N-acetyl-beta-D-glucosaminyl-(1-&gt;4)-[hyaluronan](n) + UDP + H(+). The enzyme catalyses N-acetyl-beta-D-glucosaminyl-(1-&gt;4)-[hyaluronan](n) + UDP-alpha-D-glucuronate = [hyaluronan](n+1) + UDP + H(+). It functions in the pathway glycan biosynthesis; hyaluronan biosynthesis. Functionally, glycosaminoglycan synthesis. The hyaluronic acid capsule is involved in the pathogenicity of group A Streptococci; it may be the major virulence determinant. In Streptococcus pyogenes serotype M3 (strain ATCC BAA-595 / MGAS315), this protein is Hyaluronan synthase (hasA).